Consider the following 320-residue polypeptide: Ribonuclease Z (320 aa).

Zn(2+)-binding residues include H62, H64, D66, H67, H139, D210, and H268. Residue D66 is the Proton acceptor of the active site.

This sequence belongs to the RNase Z family. In terms of assembly, homodimer. It depends on Zn(2+) as a cofactor.

It catalyses the reaction Endonucleolytic cleavage of RNA, removing extra 3' nucleotides from tRNA precursor, generating 3' termini of tRNAs. A 3'-hydroxy group is left at the tRNA terminus and a 5'-phosphoryl group is left at the trailer molecule.. Zinc phosphodiesterase, which displays some tRNA 3'-processing endonuclease activity. Probably involved in tRNA maturation, by removing a 3'-trailer from precursor tRNA. The sequence is that of Ribonuclease Z from Cyanothece sp. (strain PCC 7425 / ATCC 29141).